Here is a 305-residue protein sequence, read N- to C-terminus: Glycine--tRNA ligase alpha subunit (305 aa).

Belongs to the class-II aminoacyl-tRNA synthetase family. Tetramer of two alpha and two beta subunits.

Its subcellular location is the cytoplasm. The catalysed reaction is tRNA(Gly) + glycine + ATP = glycyl-tRNA(Gly) + AMP + diphosphate. The sequence is that of Glycine--tRNA ligase alpha subunit from Streptococcus suis (strain 98HAH33).